We begin with the raw amino-acid sequence, 362 residues long: Serine/threonine-protein kinase-like protein At3g51990 (362 aa).

The first 24 residues, 1–24 (MGYLSCKAGSAVAIAVSSAASTSG), serve as a signal peptide directing secretion. Residues 21-32 (STSGSTSSKASA) are compositionally biased toward low complexity. The segment at 21-43 (STSGSTSSKASAPPESPIEDRPR) is disordered. Positions 59-329 (FDINNLLGRG…PGMEEVVGWL (271 aa)) constitute a Protein kinase domain. Residues 65-73 (LGRGSHGSV) and Lys86 each bind ATP. An N-linked (GlcNAc...) asparagine glycan is attached at Asn136. The Proton acceptor role is filled by Asp185. Ser219 carries the phosphoserine modification. A phosphothreonine mark is found at Thr220 and Thr225. Position 233 is a phosphotyrosine (Tyr233).

Belongs to the protein kinase superfamily. Ser/Thr protein kinase family.

Its subcellular location is the secreted. The enzyme catalyses L-seryl-[protein] + ATP = O-phospho-L-seryl-[protein] + ADP + H(+). It catalyses the reaction L-threonyl-[protein] + ATP = O-phospho-L-threonyl-[protein] + ADP + H(+). The chain is Serine/threonine-protein kinase-like protein At3g51990 from Arabidopsis thaliana (Mouse-ear cress).